The chain runs to 139 residues: Protein GOS9 (139 aa).

In terms of domain architecture, Jacalin-type lectin spans 5 to 139 (LVKIGTWGGN…VDSIGVYVHI (135 aa)).

In terms of tissue distribution, expressed mainly in roots.

This Oryza sativa subsp. indica (Rice) protein is Protein GOS9 (GOS9).